Consider the following 655-residue polypeptide: Chaperone protein DnaK 3 (655 aa).

The residue at position 197 (Thr-197) is a Phosphothreonine; by autocatalysis.

Belongs to the heat shock protein 70 family.

In terms of biological role, acts as a chaperone. The polypeptide is Chaperone protein DnaK 3 (Synechococcus sp. (strain ATCC 27144 / PCC 6301 / SAUG 1402/1) (Anacystis nidulans)).